Here is a 102-residue protein sequence, read N- to C-terminus: NADH-quinone oxidoreductase subunit K (102 aa).

Helical transmembrane passes span 5-25 (LEHYLAVAAILFVTGIFGIFV), 31-51 (IVILMSIELMLLAVNINMVAF), and 66-86 (FVLTVAAAEAAIGLAILVVFF).

It belongs to the complex I subunit 4L family. NDH-1 is composed of 14 different subunits. Subunits NuoA, H, J, K, L, M, N constitute the membrane sector of the complex.

It is found in the cellular chromatophore membrane. It catalyses the reaction a quinone + NADH + 5 H(+)(in) = a quinol + NAD(+) + 4 H(+)(out). Functionally, NDH-1 shuttles electrons from NADH, via FMN and iron-sulfur (Fe-S) centers, to quinones in the respiratory chain. The immediate electron acceptor for the enzyme in this species is believed to be ubiquinone. Couples the redox reaction to proton translocation (for every two electrons transferred, four hydrogen ions are translocated across the cytoplasmic membrane), and thus conserves the redox energy in a proton gradient. The sequence is that of NADH-quinone oxidoreductase subunit K from Rhodobacter capsulatus (Rhodopseudomonas capsulata).